The primary structure comprises 246 residues: Phosphonates import ATP-binding protein PhnC (246 aa).

In terms of domain architecture, ABC transporter spans 2-246; the sequence is IKFENVSKVY…ILDEVYRKEG (245 aa). An ATP-binding site is contributed by 35–42; sequence GTSGAGKS.

It belongs to the ABC transporter superfamily. Phosphonates importer (TC 3.A.1.9.1) family. The complex is composed of two ATP-binding proteins (PhnC), two transmembrane proteins (PhnE) and a solute-binding protein (PhnD).

The protein resides in the cell membrane. It catalyses the reaction phosphonate(out) + ATP + H2O = phosphonate(in) + ADP + phosphate + H(+). Functionally, part of the ABC transporter complex PhnCDE involved in phosphonates import. Responsible for energy coupling to the transport system. This is Phosphonates import ATP-binding protein PhnC from Lactococcus lactis subsp. cremoris (strain SK11).